The sequence spans 321 residues: Lipoyl synthase (321 aa).

[4Fe-4S] cluster contacts are provided by cysteine 68, cysteine 73, cysteine 79, cysteine 94, cysteine 98, cysteine 101, and serine 308. Residues 80–297 (FNHGTATFMI…KVIAEDLGFS (218 aa)) form the Radical SAM core domain.

The protein belongs to the radical SAM superfamily. Lipoyl synthase family. [4Fe-4S] cluster is required as a cofactor.

It is found in the cytoplasm. It catalyses the reaction [[Fe-S] cluster scaffold protein carrying a second [4Fe-4S](2+) cluster] + N(6)-octanoyl-L-lysyl-[protein] + 2 oxidized [2Fe-2S]-[ferredoxin] + 2 S-adenosyl-L-methionine + 4 H(+) = [[Fe-S] cluster scaffold protein] + N(6)-[(R)-dihydrolipoyl]-L-lysyl-[protein] + 4 Fe(3+) + 2 hydrogen sulfide + 2 5'-deoxyadenosine + 2 L-methionine + 2 reduced [2Fe-2S]-[ferredoxin]. It participates in protein modification; protein lipoylation via endogenous pathway; protein N(6)-(lipoyl)lysine from octanoyl-[acyl-carrier-protein]: step 2/2. Catalyzes the radical-mediated insertion of two sulfur atoms into the C-6 and C-8 positions of the octanoyl moiety bound to the lipoyl domains of lipoate-dependent enzymes, thereby converting the octanoylated domains into lipoylated derivatives. This is Lipoyl synthase from Shewanella amazonensis (strain ATCC BAA-1098 / SB2B).